A 354-amino-acid polypeptide reads, in one-letter code: Probable cinnamyl alcohol dehydrogenase 5 (354 aa).

C43 lines the Zn(2+) pocket. Residue S45 participates in NADP(+) binding. 7 residues coordinate Zn(2+): H65, E66, C96, C99, C102, C110, and C159. NADP(+)-binding positions include T163, 184–189 (GLGGLG), 207–212 (SSSPGK), T247, G271, and 294–296 (SCI).

Belongs to the zinc-containing alcohol dehydrogenase family. Homodimer. Zn(2+) is required as a cofactor.

The enzyme catalyses (E)-cinnamyl alcohol + NADP(+) = (E)-cinnamaldehyde + NADPH + H(+). It catalyses the reaction (E)-coniferol + NADP(+) = (E)-coniferaldehyde + NADPH + H(+). It carries out the reaction (E)-sinapyl alcohol + NADP(+) = (E)-sinapaldehyde + NADPH + H(+). The catalysed reaction is (E)-4-coumaroyl alcohol + NADP(+) = (E)-4-coumaraldehyde + NADPH + H(+). The enzyme catalyses (E)-caffeyl alcohol + NADP(+) = (E)-caffeyl aldehyde + NADPH + H(+). It participates in aromatic compound metabolism; phenylpropanoid biosynthesis. Its function is as follows. Involved in lignin biosynthesis. Catalyzes the final step specific for the production of lignin monomers. Catalyzes the NADPH-dependent reduction of coniferaldehyde, 5-hydroxyconiferaldehyde, sinapaldehyde, 4-coumaraldehyde and caffeyl aldehyde to their respective alcohols. The polypeptide is Probable cinnamyl alcohol dehydrogenase 5 (Oryza sativa subsp. japonica (Rice)).